The following is a 116-amino-acid chain: Large ribosomal subunit protein bL20 (116 aa).

It belongs to the bacterial ribosomal protein bL20 family.

In terms of biological role, binds directly to 23S ribosomal RNA and is necessary for the in vitro assembly process of the 50S ribosomal subunit. It is not involved in the protein synthesizing functions of that subunit. The sequence is that of Large ribosomal subunit protein bL20 (rplT) from Mycoplasmopsis fermentans (Mycoplasma fermentans).